The following is an 823-amino-acid chain: Kinesin-like protein KIN-7N (823 aa).

A Kinesin motor domain is found at 3-325; that stretch reads KICVAVRVRP…LQFASRAKRI (323 aa). 83 to 90 lines the ATP pocket; that stretch reads GQTSSGKT. Coiled coils occupy residues 341–414, 527–557, and 696–786; these read LKRQ…NLNN, RENHSEVEDLKSRIQLLTNENDSLQVKFNEQ, and EKKL…MEEE.

Belongs to the TRAFAC class myosin-kinesin ATPase superfamily. Kinesin family. KIN-7 subfamily.

This Arabidopsis thaliana (Mouse-ear cress) protein is Kinesin-like protein KIN-7N.